A 114-amino-acid polypeptide reads, in one-letter code: DNA-binding protein Mbur_0117 (114 aa).

The segment at 14–37 is disordered; sequence ELQQQQSSPQNDAQAAYQQEQAQA. Over residues 16–35 the composition is skewed to low complexity; that stretch reads QQQQSSPQNDAQAAYQQEQA.

Belongs to the PDCD5 family.

This chain is DNA-binding protein Mbur_0117, found in Methanococcoides burtonii (strain DSM 6242 / NBRC 107633 / OCM 468 / ACE-M).